The following is a 274-amino-acid chain: NADPH-dependent 7-cyano-7-deazaguanine reductase (274 aa).

Substrate is bound at residue 80-82; that stretch reads VES. NADPH is bound at residue 82–83; that stretch reads SK. Cysteine 181 acts as the Thioimide intermediate in catalysis. Aspartate 188 (proton donor) is an active-site residue. 220-221 is a substrate binding site; the sequence is HE. An NADPH-binding site is contributed by 249–250; the sequence is RG.

It belongs to the GTP cyclohydrolase I family. QueF type 2 subfamily. As to quaternary structure, homodimer.

The protein resides in the cytoplasm. It catalyses the reaction 7-aminomethyl-7-carbaguanine + 2 NADP(+) = 7-cyano-7-deazaguanine + 2 NADPH + 3 H(+). It participates in tRNA modification; tRNA-queuosine biosynthesis. Catalyzes the NADPH-dependent reduction of 7-cyano-7-deazaguanine (preQ0) to 7-aminomethyl-7-deazaguanine (preQ1). This Burkholderia lata (strain ATCC 17760 / DSM 23089 / LMG 22485 / NCIMB 9086 / R18194 / 383) protein is NADPH-dependent 7-cyano-7-deazaguanine reductase.